The primary structure comprises 353 residues: 2-Hydroxyacid oxidase 2 (353 aa).

Positions 2-353 (PLVCLTDFRE…NQDLIQFSRL (352 aa)) constitute an FMN hydroxy acid dehydrogenase domain. FMN is bound by residues 77–79 (PTG), Ser106, and Gln128. Tyr130 is a binding site for a 2-oxocarboxylate. Thr156 serves as a coordination point for FMN. Arg165 contacts a 2-oxocarboxylate. Lys224 is a binding site for FMN. Residue His248 is the Proton acceptor of the active site. Arg251 provides a ligand contact to a 2-oxocarboxylate. FMN contacts are provided by residues 279–283 (DGGIR) and 302–303 (GR). Positions 351–353 (SRL) match the Microbody targeting signal motif.

This sequence belongs to the FMN-dependent alpha-hydroxy acid dehydrogenase family. As to quaternary structure, homotetramer. FMN serves as cofactor.

Its subcellular location is the peroxisome. It catalyses the reaction a (2S)-2-hydroxycarboxylate + O2 = a 2-oxocarboxylate + H2O2. The catalysed reaction is 2-hydroxyhexadecanoate + O2 = 2-oxohexadecanoate + H2O2. It carries out the reaction 2-hydroxyoctanoate + O2 = 2-oxooctanoate + H2O2. It functions in the pathway lipid metabolism; fatty acid metabolism. Its function is as follows. Oxidase that catalyzes the oxidation of medium and long chain hydroxyacids such as 2-hydroxyhexadecanoate and 2-hydroxyoctanoate, to the correspondong 2-oxoacids. Its role in the oxidation of 2-hydroxy fatty acids may contribute to the general pathway of fatty acid alpha-oxidation. Active in vitro with the artificial electron acceptor 2,6-dichlorophenolindophenol (DCIP), but O2 is believed to be the physiological electron acceptor, leading to the production of H2O2. The chain is 2-Hydroxyacid oxidase 2 (HAO2) from Bos taurus (Bovine).